Here is a 146-residue protein sequence, read N- to C-terminus: Meiotically up-regulated gene 96 protein (146 aa).

A helical membrane pass occupies residues 85-104 (LIRYSLILTCLVAILLSVLW).

It is found in the cytoplasm. It localises to the membrane. Has a role in meiosis. The chain is Meiotically up-regulated gene 96 protein (mug96) from Schizosaccharomyces pombe (strain 972 / ATCC 24843) (Fission yeast).